The primary structure comprises 560 residues: MFS-type transporter pgmG (560 aa).

Positions 1–32 are disordered; sequence MSETVTQTETDQRPATARSLGAEEKEAKSDEQ. Over residues 21-31 the composition is skewed to basic and acidic residues; the sequence is GAEEKEAKSDE. 8 consecutive transmembrane segments (helical) span residues 45 to 65, 84 to 104, 111 to 131, 141 to 161, 174 to 194, 201 to 221, 242 to 262, and 275 to 295; these read FIVI…NTIV, WLSV…SKIY, WLYL…GAAP, ALAG…LSVN, TGLT…GFAV, WSFY…LFML, LGTI…NFGG, and CFVV…YCIG. Asparagine 300 is a glycosylation site (N-linked (GlcNAc...) asparagine). A helical membrane pass occupies residues 313–333; it reads FIILFVQTASVATVFFVPIYF. Asparagine 343 carries an N-linked (GlcNAc...) asparagine glycan. 5 consecutive transmembrane segments (helical) span residues 346–366, 378–398, 409–429, 440–460, and 515–535; these read AIDA…AMIL, MPWY…MYTI, GYMI…FAVA, VATG…LAIA, and ISQV…LAIF.

It belongs to the major facilitator superfamily. TCR/Tet family.

The protein localises to the membrane. MFS-type transporter; part of the gene cluster that mediates the biosynthesis of pleosporalin A, ascomycone A, as well as a third cryptic naphthoquinone derived pigment, all responsible for the coloration of conidia. Seems not to be involved in pigment biosynthesis although its expression is regulated by the cluster-specific transcription factor pgmR. This Aspergillus terreus protein is MFS-type transporter pgmG.